We begin with the raw amino-acid sequence, 30 residues long: V-type proton ATPase catalytic subunit A isoform 1 (30 aa).

The protein belongs to the ATPase alpha/beta chains family. In terms of assembly, V-ATPase is a heteromultimeric enzyme composed of a peripheral catalytic V1 complex (main components: subunits A, B, C, D, E, and F) attached to an integral membrane V0 proton pore complex (main component: the proteolipid protein).

It catalyses the reaction ATP + H2O + 4 H(+)(in) = ADP + phosphate + 5 H(+)(out). In terms of biological role, catalytic subunit of the peripheral V1 complex of vacuolar ATPase. V-ATPase vacuolar ATPase is responsible for acidifying a variety of intracellular compartments in eukaryotic cells. The chain is V-type proton ATPase catalytic subunit A isoform 1 from Psilotum nudum (Whisk fern).